The following is a 243-amino-acid chain: Putative outer membrane protein RP075 (243 aa).

The N-terminal stretch at 1 to 23 (MLRIVKKLWVILFISNISINSFA) is a signal peptide.

This sequence belongs to the OmpW/AlkL family.

The protein resides in the cell outer membrane. The chain is Putative outer membrane protein RP075 from Rickettsia prowazekii (strain Madrid E).